The sequence spans 156 residues: tRNA (cytidine(34)-2'-O)-methyltransferase (156 aa).

Positions 102, 124, and 132 each coordinate S-adenosyl-L-methionine.

The protein belongs to the class IV-like SAM-binding methyltransferase superfamily. RNA methyltransferase TrmH family. TrmL subfamily. Homodimer.

Its subcellular location is the cytoplasm. It catalyses the reaction cytidine(34) in tRNA + S-adenosyl-L-methionine = 2'-O-methylcytidine(34) in tRNA + S-adenosyl-L-homocysteine + H(+). The catalysed reaction is 5-carboxymethylaminomethyluridine(34) in tRNA(Leu) + S-adenosyl-L-methionine = 5-carboxymethylaminomethyl-2'-O-methyluridine(34) in tRNA(Leu) + S-adenosyl-L-homocysteine + H(+). Its function is as follows. Methylates the ribose at the nucleotide 34 wobble position in the two leucyl isoacceptors tRNA(Leu)(CmAA) and tRNA(Leu)(cmnm5UmAA). Catalyzes the methyl transfer from S-adenosyl-L-methionine to the 2'-OH of the wobble nucleotide. The chain is tRNA (cytidine(34)-2'-O)-methyltransferase from Burkholderia pseudomallei (strain 1106a).